We begin with the raw amino-acid sequence, 174 residues long: Large ribosomal subunit protein uL10 (174 aa).

Belongs to the universal ribosomal protein uL10 family. Part of the ribosomal stalk of the 50S ribosomal subunit. The N-terminus interacts with L11 and the large rRNA to form the base of the stalk. The C-terminus forms an elongated spine to which L12 dimers bind in a sequential fashion forming a multimeric L10(L12)X complex.

Forms part of the ribosomal stalk, playing a central role in the interaction of the ribosome with GTP-bound translation factors. This Geobacter metallireducens (strain ATCC 53774 / DSM 7210 / GS-15) protein is Large ribosomal subunit protein uL10.